A 465-amino-acid polypeptide reads, in one-letter code: Adenosylhomocysteinase (465 aa).

Residues Thr56, Asp131, and Glu191 each contribute to the substrate site. 192-194 (TTT) contributes to the NAD(+) binding site. Residues Lys221 and Asp225 each coordinate substrate. NAD(+) contacts are provided by residues Asn226, 255 to 260 (GYGDVG), Glu278, Asn313, 334 to 336 (IGH), and Asn379.

It belongs to the adenosylhomocysteinase family. Requires NAD(+) as cofactor.

It localises to the cytoplasm. It catalyses the reaction S-adenosyl-L-homocysteine + H2O = L-homocysteine + adenosine. Its pathway is amino-acid biosynthesis; L-homocysteine biosynthesis; L-homocysteine from S-adenosyl-L-homocysteine: step 1/1. Functionally, may play a key role in the regulation of the intracellular concentration of adenosylhomocysteine. The polypeptide is Adenosylhomocysteinase (Bartonella henselae (strain ATCC 49882 / DSM 28221 / CCUG 30454 / Houston 1) (Rochalimaea henselae)).